The primary structure comprises 407 residues: Putative colanic acid biosynthesis glycosyl transferase WcaI (407 aa).

It participates in slime biogenesis; slime polysaccharide biosynthesis. The polypeptide is Putative colanic acid biosynthesis glycosyl transferase WcaI (wcaI) (Escherichia coli (strain K12)).